The sequence spans 460 residues: Bifunctional protein GlmU (460 aa).

Positions 1 to 229 (MTNYAIILAA…FNESLGVNDR (229 aa)) are pyrophosphorylase. Residues 8-11 (LAAG), Lys22, Gln72, and 77-78 (GT) each bind UDP-N-acetyl-alpha-D-glucosamine. Asp102 serves as a coordination point for Mg(2+). Gly139, Glu154, Asn169, and Asn227 together coordinate UDP-N-acetyl-alpha-D-glucosamine. A Mg(2+)-binding site is contributed by Asn227. The segment at 230 to 250 (VALATAETVMRQRITQKHMVN) is linker. The N-acetyltransferase stretch occupies residues 251–460 (GVTFHNPETV…RLAHHPSRSK (210 aa)). Residues Arg332 and Lys350 each coordinate UDP-N-acetyl-alpha-D-glucosamine. His362 (proton acceptor) is an active-site residue. Residues Tyr365 and Asn376 each contribute to the UDP-N-acetyl-alpha-D-glucosamine site. Acetyl-CoA-binding positions include Ala379, 385 to 386 (NY), Ser404, Ala422, and Arg439.

This sequence in the N-terminal section; belongs to the N-acetylglucosamine-1-phosphate uridyltransferase family. It in the C-terminal section; belongs to the transferase hexapeptide repeat family. Homotrimer. The cofactor is Mg(2+).

It localises to the cytoplasm. It carries out the reaction alpha-D-glucosamine 1-phosphate + acetyl-CoA = N-acetyl-alpha-D-glucosamine 1-phosphate + CoA + H(+). The catalysed reaction is N-acetyl-alpha-D-glucosamine 1-phosphate + UTP + H(+) = UDP-N-acetyl-alpha-D-glucosamine + diphosphate. It participates in nucleotide-sugar biosynthesis; UDP-N-acetyl-alpha-D-glucosamine biosynthesis; N-acetyl-alpha-D-glucosamine 1-phosphate from alpha-D-glucosamine 6-phosphate (route II): step 2/2. Its pathway is nucleotide-sugar biosynthesis; UDP-N-acetyl-alpha-D-glucosamine biosynthesis; UDP-N-acetyl-alpha-D-glucosamine from N-acetyl-alpha-D-glucosamine 1-phosphate: step 1/1. The protein operates within bacterial outer membrane biogenesis; LPS lipid A biosynthesis. Its function is as follows. Catalyzes the last two sequential reactions in the de novo biosynthetic pathway for UDP-N-acetylglucosamine (UDP-GlcNAc). The C-terminal domain catalyzes the transfer of acetyl group from acetyl coenzyme A to glucosamine-1-phosphate (GlcN-1-P) to produce N-acetylglucosamine-1-phosphate (GlcNAc-1-P), which is converted into UDP-GlcNAc by the transfer of uridine 5-monophosphate (from uridine 5-triphosphate), a reaction catalyzed by the N-terminal domain. The protein is Bifunctional protein GlmU of Streptococcus pyogenes serotype M3 (strain ATCC BAA-595 / MGAS315).